A 309-amino-acid chain; its full sequence is uncharacterized protein (309 aa).

6 helical membrane passes run 28-48 (IIALSSLLTLLINHPSLIMKP), 73-93 (MMLNLFRWVCIAILVLVVIGW), 113-133 (LIVIDGGEQAAAVMTFLLLPI), 157-177 (ITAFISYFVIRIQVAVLYFHS), 220-240 (FVVIPTWGTLLVQIVIFAALF), and 259-279 (IFAVMLGLISFSIIMAGILIL).

The protein resides in the cell membrane. This is an uncharacterized protein from Bacillus subtilis (strain 168).